The sequence spans 326 residues: uncharacterized protein (326 aa).

Residues 15–76 enclose the S4 RNA-binding domain; sequence VRIEKFCLKL…IEPYLHNHSE (62 aa). Aspartate 147 is an active-site residue.

It belongs to the pseudouridine synthase RluA family.

The catalysed reaction is a uridine in RNA = a pseudouridine in RNA. This is an uncharacterized protein from Mycoplasma pneumoniae (strain ATCC 29342 / M129 / Subtype 1) (Mycoplasmoides pneumoniae).